Here is a 308-residue protein sequence, read N- to C-terminus: GTPase Era (308 aa).

An Era-type G domain is found at 14–181 (RCGFVALIGA…KQALAAMVPP (168 aa)). The G1 stretch occupies residues 22-29 (GAPNVGKS). Position 22–29 (22–29 (GAPNVGKS)) interacts with GTP. The interval 48–52 (QTTRA) is G2. The tract at residues 69–72 (DTPG) is G3. GTP is bound by residues 69 to 73 (DTPGI) and 131 to 134 (NKVD). The tract at residues 131 to 134 (NKVD) is G4. The G5 stretch occupies residues 160–162 (ISA). Residues 212–289 (LHQELPYQST…HLFLFVKVRE (78 aa)) form the KH type-2 domain.

This sequence belongs to the TRAFAC class TrmE-Era-EngA-EngB-Septin-like GTPase superfamily. Era GTPase family. Monomer.

The protein localises to the cytoplasm. It localises to the cell inner membrane. In terms of biological role, an essential GTPase that binds both GDP and GTP, with rapid nucleotide exchange. Plays a role in 16S rRNA processing and 30S ribosomal subunit biogenesis and possibly also in cell cycle regulation and energy metabolism. In Bradyrhizobium sp. (strain BTAi1 / ATCC BAA-1182), this protein is GTPase Era.